Here is a 271-residue protein sequence, read N- to C-terminus: MEFWQHIYSNFNVIAFSIFGLKVHWYGIMYDVALLLALLLAKFFVRKFQLDINEKHLYSYFIWVEIGVILGARLGYILIYDANTMYYITHPWQIFNPYINGEFVGIRGMSYHGAIIGFLIATLLFCKKYKTNPWIFLDLVALSVPLAYVFGRIGNFLNQELFGRITNVPWGIYIDGVLRHPSQFYEAFLEGIVVFIIVYLARFKQSFQGELILVYAGAYSLARFICEFYREPDFGIGFVLWGMSMGQILSFIMFITALLVYICIKFKKVNI.

A run of 7 helical transmembrane segments spans residues 25–45 (WYGIMYDVALLLALLLAKFFV), 60–80 (YFIWVEIGVILGARLGYILIY), 103–123 (FVGIRGMSYHGAIIGFLIATL), 134–154 (WIFLDLVALSVPLAYVFGRIG), 181–201 (PSQFYEAFLEGIVVFIIVYLA), 209–229 (GELILVYAGAYSLARFICEFY), and 235–255 (GIGFVLWGMSMGQILSFIMFI). Residue arginine 152 participates in a 1,2-diacyl-sn-glycero-3-phospho-(1'-sn-glycerol) binding.

Belongs to the Lgt family.

Its subcellular location is the cell inner membrane. The enzyme catalyses L-cysteinyl-[prolipoprotein] + a 1,2-diacyl-sn-glycero-3-phospho-(1'-sn-glycerol) = an S-1,2-diacyl-sn-glyceryl-L-cysteinyl-[prolipoprotein] + sn-glycerol 1-phosphate + H(+). The protein operates within protein modification; lipoprotein biosynthesis (diacylglyceryl transfer). Catalyzes the transfer of the diacylglyceryl group from phosphatidylglycerol to the sulfhydryl group of the N-terminal cysteine of a prolipoprotein, the first step in the formation of mature lipoproteins. The polypeptide is Phosphatidylglycerol--prolipoprotein diacylglyceryl transferase (Campylobacter jejuni subsp. doylei (strain ATCC BAA-1458 / RM4099 / 269.97)).